The chain runs to 346 residues: O-methyltransferase atr3 (346 aa).

2 disordered regions span residues 1–22 (MTSV…DDLM) and 52–88 (GLKS…WYHA). S-adenosyl-L-methionine contacts are provided by residues 190-191 (DL) and 217-218 (DI).

It belongs to the class I-like SAM-binding methyltransferase superfamily. As to quaternary structure, homodimer.

The catalysed reaction is 4-O-demethylbarbatate + S-adenosyl-L-methionine = proatranorin I + S-adenosyl-L-homocysteine. Its pathway is secondary metabolite biosynthesis; terpenoid biosynthesis. Its function is as follows. O-methyltransferase; part of the gene cluster that mediates the biosynthesis of atranorin, a depside of polyketide origin that accumulates in the cortical or medullary layers of lichen thalli. Atr3 methylates the carboxyl group of 4-O-demethylbarbatic acid to yield proatranorin I. Atr3 is also able to methylate the atr2 product proatranorin III to produce the final compound atranorin. The first step in the pathway is performed by the non-reducing polyketide synthase atr1 that produces 4-O-demethylbarbatic acid composed of two 3-methylorsellinic acid (3MOA) moieties. The pathway continues with the actions of the cytochrome P450 monooygenase atr2 that catalizes the oxidation of c-9 and the O-methyltransferase atr3 that performs the methylation of the carboxyl group to yield atranorin, via the proatranorin II and III intermediates if atr2 acts first, or the proatranorin I intermediate if atr3 acts first. The sequence is that of O-methyltransferase atr3 from Stereocaulon alpinum (Alpine snow lichen).